Here is a 415-residue protein sequence, read N- to C-terminus: Gamma-glutamyl phosphate reductase (415 aa).

It belongs to the gamma-glutamyl phosphate reductase family.

The protein localises to the cytoplasm. It carries out the reaction L-glutamate 5-semialdehyde + phosphate + NADP(+) = L-glutamyl 5-phosphate + NADPH + H(+). Its pathway is amino-acid biosynthesis; L-proline biosynthesis; L-glutamate 5-semialdehyde from L-glutamate: step 2/2. In terms of biological role, catalyzes the NADPH-dependent reduction of L-glutamate 5-phosphate into L-glutamate 5-semialdehyde and phosphate. The product spontaneously undergoes cyclization to form 1-pyrroline-5-carboxylate. This chain is Gamma-glutamyl phosphate reductase, found in Parabacteroides distasonis (strain ATCC 8503 / DSM 20701 / CIP 104284 / JCM 5825 / NCTC 11152).